The sequence spans 209 residues: Large ribosomal subunit protein uL3 (209 aa).

The disordered stretch occupies residues 122-152; it reads AIKRHGQSRGPMSHGSRYHRRPGSMGPVDPN.

Belongs to the universal ribosomal protein uL3 family. As to quaternary structure, part of the 50S ribosomal subunit. Forms a cluster with proteins L14 and L19. Interacts with RNA helicase CshA.

Its function is as follows. One of the primary rRNA binding proteins, it binds directly near the 3'-end of the 23S rRNA, where it nucleates assembly of the 50S subunit. Strongly stimulates 23S rRNA precursor processing by mini-ribonuclease 3 (MrnC); 20-30% DMSO can replace L3, suggesting the protein may alter rRNA conformation. The chain is Large ribosomal subunit protein uL3 from Bacillus subtilis (strain 168).